We begin with the raw amino-acid sequence, 455 residues long: Ribulose bisphosphate carboxylase large chain (455 aa).

Residue Lys5 is modified to N6,N6,N6-trimethyllysine. Residues Asn114 and Thr164 each coordinate substrate. Residue Lys166 is the Proton acceptor of the active site. Position 168 (Lys168) interacts with substrate. Mg(2+) is bound by residues Lys192, Asp194, and Glu195. Position 192 is an N6-carboxylysine (Lys192). The active-site Proton acceptor is His285. Residues Arg286, His318, and Ser370 each coordinate substrate.

This sequence belongs to the RuBisCO large chain family. Type I subfamily. As to quaternary structure, heterohexadecamer of 8 large chains and 8 small chains; disulfide-linked. The disulfide link is formed within the large subunit homodimers. It depends on Mg(2+) as a cofactor. In terms of processing, the disulfide bond which can form in the large chain dimeric partners within the hexadecamer appears to be associated with oxidative stress and protein turnover.

It is found in the plastid. The protein localises to the chloroplast. The catalysed reaction is 2 (2R)-3-phosphoglycerate + 2 H(+) = D-ribulose 1,5-bisphosphate + CO2 + H2O. The enzyme catalyses D-ribulose 1,5-bisphosphate + O2 = 2-phosphoglycolate + (2R)-3-phosphoglycerate + 2 H(+). Functionally, ruBisCO catalyzes two reactions: the carboxylation of D-ribulose 1,5-bisphosphate, the primary event in carbon dioxide fixation, as well as the oxidative fragmentation of the pentose substrate in the photorespiration process. Both reactions occur simultaneously and in competition at the same active site. In Vachellia farnesiana (Sweet acacia), this protein is Ribulose bisphosphate carboxylase large chain.